The chain runs to 23 residues: Defensin-like protein 2 (23 aa).

Gln1 is subject to Pyrrolidone carboxylic acid.

The protein belongs to the DEFL family. As to quaternary structure, forms oligomers in its native state.

Functionally, possesses antifungal activity sensitive to inorganic cations. The sequence is that of Defensin-like protein 2 from Brassica napus (Rape).